We begin with the raw amino-acid sequence, 121 residues long: Small ribosomal subunit protein uS13 (121 aa).

A disordered region spans residues 95-121; it reads LPVRGQNTKNNARTRKGKAVAIAGKKK. Positions 106–121 are enriched in basic residues; sequence ARTRKGKAVAIAGKKK.

This sequence belongs to the universal ribosomal protein uS13 family. In terms of assembly, part of the 30S ribosomal subunit. Forms a loose heterodimer with protein S19. Forms two bridges to the 50S subunit in the 70S ribosome.

Located at the top of the head of the 30S subunit, it contacts several helices of the 16S rRNA. In the 70S ribosome it contacts the 23S rRNA (bridge B1a) and protein L5 of the 50S subunit (bridge B1b), connecting the 2 subunits; these bridges are implicated in subunit movement. Contacts the tRNAs in the A and P-sites. The polypeptide is Small ribosomal subunit protein uS13 (Streptococcus thermophilus (strain CNRZ 1066)).